Reading from the N-terminus, the 105-residue chain is uncharacterized protein (105 aa).

It to C.jejuni CJ1463.

This is an uncharacterized protein from Helicobacter pylori (strain ATCC 700392 / 26695) (Campylobacter pylori).